The chain runs to 334 residues: Dual specificity mitogen-activated protein kinase kinase 6 (334 aa).

Residues 1 to 11 (MSQSKGKKRNP) are compositionally biased toward basic residues. Residues 1–34 (MSQSKGKKRNPGLKIPKEAFEQPQTSSTPPRDLD) are disordered. The d domain stretch occupies residues 4–19 (SKGKKRNPGLKIPKEA). Residues 53–314 (LEPIMELGRG…YPELMQHPFF (262 aa)) form the Protein kinase domain. ATP-binding positions include 59 to 67 (LGRGAYGVV) and Lys-82. The active-site Proton acceptor is the Asp-179. A (Microbial infection) O-acetylserine; by Yersinia YopJ; alternate modification is found at Ser-207. Position 207 is a phosphoserine; by MAP3K; alternate (Ser-207). Thr-211 is subject to (Microbial infection) O-acetylthreonine; by Yersinia YopJ; alternate. Thr-211 carries the phosphothreonine; by MAP3K; alternate modification. Residues 311 to 334 (HPFFTLHESKGTDVASFVKLILGD) form a DVD domain region.

Belongs to the protein kinase superfamily. STE Ser/Thr protein kinase family. MAP kinase kinase subfamily. As to quaternary structure, dimer. Interacts (via its D domain) with its substrates MAPK11, MAPK12, MAPK13 and MAPK14. Interacts (via its DVD domain) with MAP3Ks activators like MAP3K5/ASK1, MAP3K1/MEKK1, MAP3K2/MEKK2, MAP3K3/MEKK3, MAP3K4/MEKK4, MAP3K7/TAK1, MAP3K11/MLK3 and MAP3K17/TAOK2. Interacts with DCTN1. Interacts with EIF2AK2/PKR. (Microbial infection) Interacts with Yersinia YopJ. In terms of processing, weakly autophosphorylated. Phosphorylated at Ser-207 and Thr-211 by the majority of M3Ks, such as MAP3K5/ASK1, MAP3K1/MEKK1, MAP3K2/MEKK2, MAP3K3/MEKK3, MAP3K4/MEKK4, MAP3K7/TAK1, MAP3K11/MLK3 and MAP3K17/TAOK2. Post-translationally, in response to genotoxic stress, MAP3K-phosphorylated MAP2K6 is ubiquitinated and degraded by the SCF(FBXO31) complex. (Microbial infection) Acetylation of Ser-207 and Thr-211 by Yersinia YopJ prevents phosphorylation and activation, thus blocking the MAPK signaling pathway. As to expression, isoform 2 is only expressed in skeletal muscle. Isoform 1 is expressed in skeletal muscle, heart, and in lesser extent in liver or pancreas.

It localises to the nucleus. The protein localises to the cytoplasm. The protein resides in the cytoskeleton. It catalyses the reaction L-seryl-[protein] + ATP = O-phospho-L-seryl-[protein] + ADP + H(+). The enzyme catalyses L-threonyl-[protein] + ATP = O-phospho-L-threonyl-[protein] + ADP + H(+). The catalysed reaction is L-tyrosyl-[protein] + ATP = O-phospho-L-tyrosyl-[protein] + ADP + H(+). Its activity is regulated as follows. Activated by dual phosphorylation on Ser-207 and Thr-211 in response to a variety of cellular stresses, including UV radiation, osmotic shock, hypoxia, inflammatory cytokines, interferon gamma (IFNG), and less often by growth factors. MAP2K6/MKK6 is activated by the majority of M3Ks, such as MAP3K5/ASK1, MAP3K1/MEKK1, MAP3K2/MEKK2, MAP3K3/MEKK3, MAP3K4/MEKK4, MAP3K7/TAK1, MAP3K11/MLK3 and MAP3K17/TAOK2. In terms of biological role, dual specificity protein kinase which acts as an essential component of the MAP kinase signal transduction pathway. With MAP3K3/MKK3, catalyzes the concomitant phosphorylation of a threonine and a tyrosine residue in the MAP kinases p38 MAPK11, MAPK12, MAPK13 and MAPK14 and plays an important role in the regulation of cellular responses to cytokines and all kinds of stresses. Especially, MAP2K3/MKK3 and MAP2K6/MKK6 are both essential for the activation of MAPK11 and MAPK13 induced by environmental stress, whereas MAP2K6/MKK6 is the major MAPK11 activator in response to TNF. MAP2K6/MKK6 also phosphorylates and activates PAK6. The p38 MAP kinase signal transduction pathway leads to direct activation of transcription factors. Nuclear targets of p38 MAP kinase include the transcription factors ATF2 and ELK1. Within the p38 MAPK signal transduction pathway, MAP3K6/MKK6 mediates phosphorylation of STAT4 through MAPK14 activation, and is therefore required for STAT4 activation and STAT4-regulated gene expression in response to IL-12 stimulation. The pathway is also crucial for IL-6-induced SOCS3 expression and down-regulation of IL-6-mediated gene induction; and for IFNG-dependent gene transcription. Has a role in osteoclast differentiation through NF-kappa-B transactivation by TNFSF11, and in endochondral ossification and since SOX9 is another likely downstream target of the p38 MAPK pathway. MAP2K6/MKK6 mediates apoptotic cell death in thymocytes. Acts also as a regulator for melanocytes dendricity, through the modulation of Rho family GTPases. This is Dual specificity mitogen-activated protein kinase kinase 6 (MAP2K6) from Homo sapiens (Human).